Consider the following 301-residue polypeptide: Probable alpha-L-glutamate ligase (301 aa).

The 184-residue stretch at 104–287 (LQLLSRKGIG…VAGIIIEYLE (184 aa)) folds into the ATP-grasp domain. Residues K141, 178–179 (EY), D187, and 211–213 (RSN) each bind ATP. D248, E260, and N262 together coordinate Mg(2+). Mn(2+) is bound by residues D248, E260, and N262.

Belongs to the RimK family. Mg(2+) serves as cofactor. The cofactor is Mn(2+).

This Azotobacter vinelandii (strain DJ / ATCC BAA-1303) protein is Probable alpha-L-glutamate ligase.